Reading from the N-terminus, the 638-residue chain is Dihydrolipoyllysine-residue acetyltransferase component of pyruvate dehydrogenase complex (638 aa).

2 Lipoyl-binding domains span residues 2 to 74 (SEII…IELE) and 117 to 191 (SQEV…LTLR). Lys40 is subject to N6-lipoyllysine. Residues 90-117 (PAAPTQAVDEAEAPSPGASATPAPAAAS) show a composition bias toward low complexity. Residues 90–119 (PAAPTQAVDEAEAPSPGASATPAPAAASQE) are disordered. Lys157 bears the N6-lipoyllysine mark. The segment at 201-220 (APAAAAAASPAPAPLAPAAA) is disordered. One can recognise a Lipoyl-binding 3 domain in the interval 222-296 (PQEVKVPDIG…GTGDQILTLR (75 aa)). Lys262 carries the N6-lipoyllysine modification. Over residues 301–320 (APSGPRARGSPGQAAAAPGA) the composition is skewed to low complexity. A disordered region spans residues 301–336 (APSGPRARGSPGQAAAAPGAAPAPAPVGAPSRNGAK). One can recognise a Peripheral subunit-binding (PSBD) domain in the interval 338 to 375 (HAGPAVRQLAREFGVELAAINSTGPRGRILKEDVQAYV). Residues 382-638 (AKEAPAAGAA…LLADIRAILL (257 aa)) are catalytic. The active site involves His611.

This sequence belongs to the 2-oxoacid dehydrogenase family. In terms of assembly, forms a 24-polypeptide structural core with octahedral symmetry. (R)-lipoate is required as a cofactor.

It carries out the reaction N(6)-[(R)-dihydrolipoyl]-L-lysyl-[protein] + acetyl-CoA = N(6)-[(R)-S(8)-acetyldihydrolipoyl]-L-lysyl-[protein] + CoA. The pyruvate dehydrogenase complex catalyzes the overall conversion of pyruvate to acetyl-CoA and CO(2). It contains multiple copies of three enzymatic components: pyruvate dehydrogenase (E1), dihydrolipoamide acetyltransferase (E2) and lipoamide dehydrogenase (E3). This Azotobacter vinelandii protein is Dihydrolipoyllysine-residue acetyltransferase component of pyruvate dehydrogenase complex.